We begin with the raw amino-acid sequence, 397 residues long: uncharacterized protein (397 aa).

2 disordered regions span residues 159–203 (LNSS…KSTI) and 221–397 (NSVK…KTKN). The span at 221–240 (NSVKSSPSKSFVSISSPVQS) shows a compositional bias: low complexity. 2 stretches are compositionally biased toward polar residues: residues 285-309 (TSTL…SSST) and 320-330 (VNPNSTSSVTF). Positions 342–371 (CSRCKKSKKGCDRQRPCGRCRDAGLNSEDC) form a DNA-binding region, zn(2)-C6 fungal-type. Basic and acidic residues predominate over residues 350-363 (KGCDRQRPCGRCRD). A compositionally biased stretch (basic residues) spans 383 to 397 (RKPRGRGRGRPKTKN).

The protein localises to the nucleus. This is an uncharacterized protein from Schizosaccharomyces pombe (strain 972 / ATCC 24843) (Fission yeast).